Here is a 117-residue protein sequence, read N- to C-terminus: Aspartate 1-decarboxylase (117 aa).

The active-site Schiff-base intermediate with substrate; via pyruvic acid is the Ser25. Pyruvic acid (Ser) is present on Ser25. Residue Thr57 coordinates substrate. Tyr58 serves as the catalytic Proton donor. A substrate-binding site is contributed by 73-75; the sequence is GAA.

This sequence belongs to the PanD family. Heterooctamer of four alpha and four beta subunits. It depends on pyruvate as a cofactor. Post-translationally, is synthesized initially as an inactive proenzyme, which is activated by self-cleavage at a specific serine bond to produce a beta-subunit with a hydroxyl group at its C-terminus and an alpha-subunit with a pyruvoyl group at its N-terminus.

It is found in the cytoplasm. It carries out the reaction L-aspartate + H(+) = beta-alanine + CO2. Its pathway is cofactor biosynthesis; (R)-pantothenate biosynthesis; beta-alanine from L-aspartate: step 1/1. Its function is as follows. Catalyzes the pyruvoyl-dependent decarboxylation of aspartate to produce beta-alanine. This is Aspartate 1-decarboxylase from Thermoanaerobacter pseudethanolicus (strain ATCC 33223 / 39E) (Clostridium thermohydrosulfuricum).